A 325-amino-acid polypeptide reads, in one-letter code: Elongation factor P--(R)-beta-lysine ligase (325 aa).

76–78 (SPE) contributes to the substrate binding site. Residues 100 to 102 (RNE) and asparagine 109 contribute to the ATP site. Tyrosine 118 is a binding site for substrate. 244–245 (EL) provides a ligand contact to ATP. Residue glutamate 251 coordinates substrate. Glycine 300 is a binding site for ATP.

This sequence belongs to the class-II aminoacyl-tRNA synthetase family. EpmA subfamily. As to quaternary structure, homodimer.

It carries out the reaction D-beta-lysine + L-lysyl-[protein] + ATP = N(6)-((3R)-3,6-diaminohexanoyl)-L-lysyl-[protein] + AMP + diphosphate + H(+). In terms of biological role, with EpmB is involved in the beta-lysylation step of the post-translational modification of translation elongation factor P (EF-P). Catalyzes the ATP-dependent activation of (R)-beta-lysine produced by EpmB, forming a lysyl-adenylate, from which the beta-lysyl moiety is then transferred to the epsilon-amino group of a conserved specific lysine residue in EF-P. The protein is Elongation factor P--(R)-beta-lysine ligase of Citrobacter koseri (strain ATCC BAA-895 / CDC 4225-83 / SGSC4696).